The chain runs to 130 residues: Small ribosomal subunit protein uS9 (130 aa).

Residues 111-130 (VERKKVGLHKARRATQFSKR) are disordered. Positions 116–130 (VGLHKARRATQFSKR) are enriched in basic residues.

Belongs to the universal ribosomal protein uS9 family.

This is Small ribosomal subunit protein uS9 from Xylella fastidiosa (strain M23).